A 1597-amino-acid chain; its full sequence is Protein STU1 (1597 aa).

Disordered regions lie at residues 220–265 (GNSS…PSSS), 519–958 (DKVN…RPIH), 1005–1154 (DAEA…ELNT), and 1307–1332 (SQRPPDKRTSRAFLEAPSPSPDSSLV). The segment covering 535-552 (APRESLKEVMRRSRESSV) has biased composition (basic and acidic residues). Over residues 577–605 (SSGLVGRSLSGSNLTDRSNRLSSTSTSSR) the composition is skewed to low complexity. Polar residues-rich tracts occupy residues 610-622 (AVSDSTRPTQMTR) and 632-645 (PSLTRSSRDQSLTR). Composition is skewed to basic and acidic residues over residues 660 to 673 (GSRELPKQRVDQNR) and 694 to 708 (ESSRQSRESSLDPSR). The span at 709 to 726 (ESSLAPSVHSSTAISRES) shows a compositional bias: polar residues. The span at 765-781 (EETMNEVTTAEATATTA) shows a compositional bias: low complexity. Polar residues-rich tracts occupy residues 791–801 (PRESTPPNSSP) and 808–822 (PATQGVSTSPATGKS). A compositionally biased stretch (basic and acidic residues) spans 832 to 846 (ELSRDLNGESKHLKE). Composition is skewed to polar residues over residues 918-933 (DSQSHGADSADLQSEP), 1013-1025 (TEQTEAVKTSDTA), and 1036-1045 (NSEQGPSTEP). Basic and acidic residues predominate over residues 1081–1091 (ASDEIETDHTK). Positions 1108 to 1119 (EPMEICDSDNDA) are enriched in acidic residues. Over residues 1122 to 1139 (NGTNPDTKCQDQQDSTTP) the composition is skewed to polar residues. One copy of the HEAT repeat lies at 1537-1573 (PSYETQLLALITELISDPDPLVRRVTVGLVVRVLRVS).

This sequence belongs to the CLASP family. As to quaternary structure, interacts with microtubules.

It is found in the cytoplasm. The protein resides in the cytoskeleton. Its subcellular location is the nucleus. It localises to the spindle. Its function is as follows. Microtubule binding protein that promotes the stabilization of dynamic microtubules. Required for mitotic spindle formation. The sequence is that of Protein STU1 (STU1) from Yarrowia lipolytica (strain CLIB 122 / E 150) (Yeast).